The chain runs to 394 residues: Subtilisin-like protease 4 (394 aa).

The N-terminal stretch at 1–17 (CLKTLSVFLAAFAAADA) is a signal peptide. A propeptide spanning residues 18–116 (RAVFKTQGHK…VEQDQVVRIS (99 aa)) is cleaved from the precursor. One can recognise an Inhibitor I9 domain in the interval 36-115 (YIVVMKDGVS…YVEQDQVVRI (80 aa)). Asn-100 carries N-linked (GlcNAc...) asparagine glycosylation. The Peptidase S8 domain occupies 126-394 (SWGLGRVSHR…STTNRLLYNG (269 aa)). Residues Asp-158 and His-189 each act as charge relay system in the active site. N-linked (GlcNAc...) asparagine glycans are attached at residues Asn-250 and Asn-306. The active-site Charge relay system is the Ser-344.

The protein belongs to the peptidase S8 family.

It localises to the secreted. Secreted subtilisin-like serine protease with keratinolytic activity that contributes to pathogenicity. The polypeptide is Subtilisin-like protease 4 (SUB4) (Trichophyton equinum (Horse ringworm fungus)).